A 376-amino-acid polypeptide reads, in one-letter code: Glutamate 5-kinase (376 aa).

Lysine 17 contacts ATP. 3 residues coordinate substrate: serine 57, aspartate 144, and asparagine 156. 176–177 (TD) serves as a coordination point for ATP. Positions 283-361 (KGQLVLDEGA…SEINQLLGYS (79 aa)) constitute a PUA domain.

It belongs to the glutamate 5-kinase family.

Its subcellular location is the cytoplasm. It catalyses the reaction L-glutamate + ATP = L-glutamyl 5-phosphate + ADP. The protein operates within amino-acid biosynthesis; L-proline biosynthesis; L-glutamate 5-semialdehyde from L-glutamate: step 1/2. Its function is as follows. Catalyzes the transfer of a phosphate group to glutamate to form L-glutamate 5-phosphate. The chain is Glutamate 5-kinase from Hydrogenovibrio crunogenus (strain DSM 25203 / XCL-2) (Thiomicrospira crunogena).